The following is an 891-amino-acid chain: Receptor-like protein 50 (891 aa).

Positions 1-22 are cleaved as a signal peptide; that stretch reads MITIIWSLCLIFCLSNSILVIA. The Extracellular portion of the chain corresponds to 23-849; that stretch reads KDLCLPDQRD…KEEKDKGLSW (827 aa). N62 and N98 each carry an N-linked (GlcNAc...) asparagine glycan. LRR repeat units follow at residues 105–130, 132–152, 153–176, 177–201, 203–225, 226–249, and 250–272; these read QHLQ…NFKY, RVLN…LRSL, SYLT…SMGN, LKHL…LGNL, YLTD…MGNL, KSLR…LGSL, and SNLT…SMSS. A glycan (N-linked (GlcNAc...) asparagine) is linked at N200. N251, N285, and N306 each carry an N-linked (GlcNAc...) asparagine glycan. LRR repeat units lie at residues 286-309, 310-334, 336-358, and 359-383; these read LSSL…NMSS, LSKL…LFML, SLIK…NISS, and PSNL…ILKL. N355 is a glycosylation site (N-linked (GlcNAc...) asparagine). An LRR 12; degenerate repeat occupies 384 to 407; the sequence is VGLSALSLSFWDTGGIVDFSIFLQ. LRR repeat units lie at residues 408 to 436, 438 to 453, 454 to 477, 478 to 504, 506 to 519, 520 to 544, 545 to 568, 570 to 591, 593 to 614, 615 to 641, 642 to 665, 712 to 736, 737 to 760, 761 to 784, and 786 to 809; these read LKSL…MMHL, LSSC…LENQ, TSLY…LWRL, PTLR…IYSF, ASDN…PRAV, CEIG…EISN, KTLS…SLHG, LRSL…LINC, YLQF…WLKS, LPNL…SLSF, SKLR…YFVG, FEIY…IGIL, KELI…LSNL, SNLQ…LGEL, and FLAR…QIQS. N-linked (GlcNAc...) asparagine glycosylation is found at N422, N442, and N452. N-linked (GlcNAc...) asparagine glycans are attached at residues N531, N544, N554, N590, and N605. N-linked (GlcNAc...) asparagine glycosylation is found at N743 and N759. N-linked (GlcNAc...) asparagine glycans are attached at residues N791 and N811. Residues 850-870 traverse the membrane as a helical segment; sequence VAAAIGYVPGLFCGLAIGHIL. Topologically, residues 871–891 are cytoplasmic; sequence TSYKRDWFMRIFSCFSSPLKK.

Belongs to the RLP family.

It localises to the cell membrane. This Arabidopsis thaliana (Mouse-ear cress) protein is Receptor-like protein 50.